A 437-amino-acid polypeptide reads, in one-letter code: Methylenetetrahydrofolate--tRNA-(uracil-5-)-methyltransferase TrmFO (437 aa).

Residue 10–15 participates in FAD binding; sequence GGGLAG.

It belongs to the MnmG family. TrmFO subfamily. Requires FAD as cofactor.

It is found in the cytoplasm. The catalysed reaction is uridine(54) in tRNA + (6R)-5,10-methylene-5,6,7,8-tetrahydrofolate + NADH + H(+) = 5-methyluridine(54) in tRNA + (6S)-5,6,7,8-tetrahydrofolate + NAD(+). It carries out the reaction uridine(54) in tRNA + (6R)-5,10-methylene-5,6,7,8-tetrahydrofolate + NADPH + H(+) = 5-methyluridine(54) in tRNA + (6S)-5,6,7,8-tetrahydrofolate + NADP(+). In terms of biological role, catalyzes the folate-dependent formation of 5-methyl-uridine at position 54 (M-5-U54) in all tRNAs. The sequence is that of Methylenetetrahydrofolate--tRNA-(uracil-5-)-methyltransferase TrmFO from Geotalea daltonii (strain DSM 22248 / JCM 15807 / FRC-32) (Geobacter daltonii).